The primary structure comprises 273 residues: Urease accessory protein UreD (273 aa).

This sequence belongs to the UreD family. UreD, UreF and UreG form a complex that acts as a GTP-hydrolysis-dependent molecular chaperone, activating the urease apoprotein by helping to assemble the nickel containing metallocenter of UreC. The UreE protein probably delivers the nickel.

The protein localises to the cytoplasm. In terms of biological role, required for maturation of urease via the functional incorporation of the urease nickel metallocenter. The chain is Urease accessory protein UreD from Mycolicibacterium gilvum (strain PYR-GCK) (Mycobacterium gilvum (strain PYR-GCK)).